We begin with the raw amino-acid sequence, 221 residues long: tRNA (guanine-N(7)-)-methyltransferase (221 aa).

Positions 43, 68, and 123 each coordinate S-adenosyl-L-methionine. Asp-123 is a catalytic residue. Residues Lys-127, Asp-159, and 199-202 (TEYE) each bind substrate.

Belongs to the class I-like SAM-binding methyltransferase superfamily. TrmB family.

The catalysed reaction is guanosine(46) in tRNA + S-adenosyl-L-methionine = N(7)-methylguanosine(46) in tRNA + S-adenosyl-L-homocysteine. Its pathway is tRNA modification; N(7)-methylguanine-tRNA biosynthesis. Catalyzes the formation of N(7)-methylguanine at position 46 (m7G46) in tRNA. The protein is tRNA (guanine-N(7)-)-methyltransferase of Mycoplasma mycoides subsp. mycoides SC (strain CCUG 32753 / NCTC 10114 / PG1).